Here is a 339-residue protein sequence, read N- to C-terminus: 2-deoxy-scyllo-inosamine dehydrogenase (339 aa).

Residues Cys37, His59, Cys88, Cys91, Cys94, Cys102, and Glu143 each contribute to the Zn(2+) site.

The protein belongs to the zinc-containing alcohol dehydrogenase family. DOIA dehydrogenase subfamily. Zn(2+) serves as cofactor.

The catalysed reaction is 2-deoxy-scyllo-inosamine + NADP(+) = 3-amino-2,3-dideoxy-scyllo-inosose + NADPH + H(+). It carries out the reaction 2-deoxy-scyllo-inosamine + NAD(+) = 3-amino-2,3-dideoxy-scyllo-inosose + NADH + H(+). The protein operates within metabolic intermediate biosynthesis; 2-deoxystreptamine biosynthesis; 2-deoxystreptamine from D-glucose 6-phosphate: step 3/4. It participates in antibiotic biosynthesis; paromomycin biosynthesis. Functionally, catalyzes the oxidation of 2-deoxy-scyllo-inosamine (DOIA) with NAD(+) or NADP(+), forming 3-amino-2,3-dideoxy-scyllo-inosose (amino-DOI). The protein is 2-deoxy-scyllo-inosamine dehydrogenase (parE) of Streptomyces paromomycinus (Streptomyces rimosus subsp. paromomycinus).